Consider the following 164-residue polypeptide: Pyruvoyl-dependent arginine decarboxylase (164 aa).

Ser-52 carries the post-translational modification Pyruvic acid (Ser).

This sequence belongs to the PdaD family. Pyruvate serves as cofactor.

The enzyme catalyses L-arginine + H(+) = agmatine + CO2. The sequence is that of Pyruvoyl-dependent arginine decarboxylase from Methanococcus maripaludis (strain C7 / ATCC BAA-1331).